Consider the following 246-residue polypeptide: UPF0309 protein ABC0887 (246 aa).

The SIS domain occupies 33–212 (MVHAIKEGKS…VLKMIEQLEE (180 aa)).

It belongs to the UPF0309 family.

This chain is UPF0309 protein ABC0887, found in Shouchella clausii (strain KSM-K16) (Alkalihalobacillus clausii).